The sequence spans 113 residues: Vitelline membrane protein Vm32E (113 aa).

Positions 1 to 17 (MKIVAFTLVAFVALAGA) are cleaved as a signal peptide. Residues 33–70 (GYPAPPCPTNYLFSCQPNLAPVPCAQQAPAYGSAGAYT) enclose the VM domain.

Belongs to the vitelline membrane family.

The protein resides in the secreted. In terms of biological role, major early eggshell protein. This is Vitelline membrane protein Vm32E from Drosophila erecta (Fruit fly).